The sequence spans 929 residues: MWARLLLHVAYILIPLLGSSARGYTGRKAPGHYSAERRRLGPHVCLSGFGSGCCPGWAPSMGSGHCTLPLCSFGCGSGICIAPNVCSCQDGEQGATCPEAHGSCGEYGCDLTCNHGGCQEVARVCPVGFLMTETAVGIRCADIDECLSSSCEGHCVNTEGGFVCECGPGMQLSADRHSCQDTDECLGTPCQQRCKNSIGSYKCSCRAGFHLHGNRHSCIDVNECRRPQERRVCHHTCHNTVGSFLCTCRPGFRLRSDRVSCEAFPKAVLAPSAILQPRQHPAKMSLLLPEAGRPALSPGHSPPPGAPGYPTGVRTISQPSTTQVLPTFFPTQLISTPVPSSSPLGTLGPPSLLQGAVGTPSSPRGPESPKLGAGSSSCWHLGATYESGSRWNQPGCSQCLCQDGEVTCGGVRCDATCSHPVPPRDGGCCPSCTGCFHSGAIRAEGDVFSPPEENCTVCVCLAGNVSCISPECPPGPCKASPQSDCCTCVPGRCYFHGRWYTDGAVFSGGGDDCTTCVCQNGEVECSFTPCPELECPREEWLLGPGQCCFTCREPTPTTGCSLDDNGVEFPIGQIWSPGDPCELCVCQADGSVSCKRTDCVDSCPHPIRIPGQCCPDCSAGCTYTGRIFYNNETFPSVLDPCLSCICLLGSVACSPVDCPITCTYPFHPDGECCPVCHDCNFEGRKVVNGQVFTLDDEPCTRCICQLGEVSCETVPCRPICTDPSCPDSVFPLEEKQQPSPHGELAKAARNARGDTEVPVNCSSCPGPPSASPTRPMVHLLQRLLRTNLSNIQSASPSPPIAQTSSSPLLEPEGISLGKPRASQPPEPSAGSPVSPRLSTLPPAIPGTPLSPVTPESSSSTFGTQTAFQWLLSATPLTEAETPSMTNADLSETLTTSSSSQRLSAALPDTPNPVPQQSTIDTPKKENSTI.

The signal sequence occupies residues 1–21; the sequence is MWARLLLHVAYILIPLLGSSA. Residues 70–98 enclose the EGF-like 1 domain; sequence LCSFGCGSGICIAPNVCSCQDGEQGATCP. An EGF-like 2; calcium-binding domain is found at 142-180; the sequence is DIDECLSSSCEGHCVNTEGGFVCECGPGMQLSADRHSCQ. Disulfide bonds link C146-C155, C151-C164, C166-C179, C185-C194, C190-C203, C205-C218, C224-C237, C233-C246, and C248-C261. An EGF-like 3; calcium-binding domain is found at 181–219; the sequence is DTDECLGTPCQQRCKNSIGSYKCSCRAGFHLHGNRHSCI. An EGF-like 4; calcium-binding domain is found at 220–262; the sequence is DVNECRRPQERRVCHHTCHNTVGSFLCTCRPGFRLRSDRVSCE. Disordered regions lie at residues 291–317 and 339–374; these read AGRP…RTIS and PSSS…LGAG. The segment covering 339-353 has biased composition (low complexity); the sequence is PSSSPLGTLGPPSLL. 6 VWFC domains span residues 376–433, 433–494, 491–552, 558–618, 619–677, and 677–762; these read SSCW…PSCT, TGCF…GRCY, GRCY…FTCR, TGCS…PDCS, AGCT…PVCH, and HDCN…VNCS. N454 and N464 each carry an N-linked (GlcNAc...) asparagine glycan. Residues 731–774 are disordered; that stretch reads PLEEKQQPSPHGELAKAARNARGDTEVPVNCSSCPGPPSASPTR. The segment covering 743 to 755 has biased composition (basic and acidic residues); sequence ELAKAARNARGDT. The N-linked (GlcNAc...) asparagine glycan is linked to N787. The segment covering 791–807 has biased composition (polar residues); sequence IQSASPSPPIAQTSSSP. Disordered stretches follow at residues 791 to 861 and 879 to 929; these read IQSA…SSTF and AETP…NSTI. Over residues 889–903 the composition is skewed to low complexity; the sequence is LSETLTTSSSSQRLS.

It localises to the secreted. May be a regulatory element in the beta-catenin signaling pathway and a target for chemoprevention of hapatocellular carcinoma. The chain is von Willebrand factor C and EGF domain-containing protein (Vwce) from Mus musculus (Mouse).